Consider the following 1096-residue polypeptide: uncharacterized protein (1096 aa).

This sequence belongs to the IIV-6 261R/396L/443R family.

This is an uncharacterized protein from Invertebrate iridescent virus 3 (IIV-3).